A 130-amino-acid chain; its full sequence is Small ribosomal subunit protein uS11 (130 aa).

It belongs to the universal ribosomal protein uS11 family. As to quaternary structure, part of the 30S ribosomal subunit.

Located on the platform of the 30S subunit. The sequence is that of Small ribosomal subunit protein uS11 from Ignicoccus hospitalis (strain KIN4/I / DSM 18386 / JCM 14125).